A 271-amino-acid polypeptide reads, in one-letter code: Rhomboid-type serine protease 2 (271 aa).

6 helical membrane-spanning segments follow: residues 16–36 (GLAVGLSIFLTALFLVNNLVY), 64–84 (HLSFFHLFFNVISTFSMIVMF), 89–111 (GTLYTGVILNLLAVFTAIPYCLI), 115–137 (LFPNVEIGGASGWFFSFLGYFAV), 152–172 (FSFPTLYFPVALLFVTALLAP), and 176–196 (LPGHAIGLLLGYFMGLKENWV). S125 (nucleophile) is an active-site residue. Residue H179 is part of the active site. Positions 252 to 271 (HNTDTPAEPTFQGNGRVLGN) are disordered.

It belongs to the peptidase S54 family.

The protein localises to the golgi apparatus membrane. It localises to the golgi apparatus. Its subcellular location is the cis-Golgi network membrane. It carries out the reaction Cleaves type-1 transmembrane domains using a catalytic dyad composed of serine and histidine that are contributed by different transmembrane domains.. Probable rhomboid-type serine protease that catalyzes intramembrane proteolysis. The chain is Rhomboid-type serine protease 2 (RBD2) from Kluyveromyces lactis (strain ATCC 8585 / CBS 2359 / DSM 70799 / NBRC 1267 / NRRL Y-1140 / WM37) (Yeast).